We begin with the raw amino-acid sequence, 324 residues long: tRNA pseudouridine synthase B (324 aa).

Asp-49 serves as the catalytic Nucleophile. Residues 87-107 (RSTDDLEGQPTKTSDKRPSRE) form a disordered region.

The protein belongs to the pseudouridine synthase TruB family. Type 1 subfamily.

The catalysed reaction is uridine(55) in tRNA = pseudouridine(55) in tRNA. Its function is as follows. Responsible for synthesis of pseudouridine from uracil-55 in the psi GC loop of transfer RNAs. This is tRNA pseudouridine synthase B from Brucella melitensis biotype 1 (strain ATCC 23456 / CCUG 17765 / NCTC 10094 / 16M).